A 261-amino-acid polypeptide reads, in one-letter code: DNA repair protein RecO (261 aa).

It belongs to the RecO family.

Its function is as follows. Involved in DNA repair and RecF pathway recombination. This is DNA repair protein RecO from Gloeobacter violaceus (strain ATCC 29082 / PCC 7421).